The primary structure comprises 69 residues: Large ribosomal subunit protein uL29 (69 aa).

It belongs to the universal ribosomal protein uL29 family.

This chain is Large ribosomal subunit protein uL29, found in Sulfolobus acidocaldarius (strain ATCC 33909 / DSM 639 / JCM 8929 / NBRC 15157 / NCIMB 11770).